Reading from the N-terminus, the 80-residue chain is Defensin-like protein 14 (80 aa).

The N-terminal stretch at M1–A29 is a signal peptide. A Pyrrolidone carboxylic acid modification is found at Q30. 4 cysteine pairs are disulfide-bonded: C33-C80, C44-C65, C50-C74, and C54-C76.

Belongs to the DEFL family.

It localises to the secreted. Functionally, confers broad-spectrum resistance to pathogens. Has antifungal activity in vitro. The sequence is that of Defensin-like protein 14 (PDF1.3) from Arabidopsis thaliana (Mouse-ear cress).